Consider the following 387-residue polypeptide: Alpha-sarcoglycan (387 aa).

The signal sequence occupies residues 1-23 (MAETLFWTPLLVVLLAGLGDTEA). The Extracellular segment spans residues 24–290 (QQTTLHPLVG…APDRDFLVDA (267 aa)). 2 N-linked (GlcNAc...) asparagine glycosylation sites follow: asparagine 174 and asparagine 246. Residues 291-311 (LVTLLVPLLVALLLTLLLAYV) form a helical membrane-spanning segment. Topologically, residues 312–387 (MCCRREGRLK…AQVPLILDQH (76 aa)) are cytoplasmic. Serine 377 is modified (phosphoserine).

The protein belongs to the sarcoglycan alpha/epsilon family. Interacts with the syntrophin SNTA1. Cross-link to form 2 major subcomplexes: one consisting of SGCB, SGCD and SGCG and the other consisting of SGCB and SGCD. The association between SGCB and SGCG is particularly strong while SGCA is loosely associated with the other sarcoglycans. As to expression, most strongly expressed in skeletal muscle. Also expressed in cardiac muscle and, at much lower levels, in lung. In the fetus, most abundant in cardiac muscle and, at lower levels, in lung. Also detected in liver and kidney. Not expressed in brain.

The protein localises to the cell membrane. It is found in the sarcolemma. The protein resides in the cytoplasm. It localises to the cytoskeleton. Component of the sarcoglycan complex, a subcomplex of the dystrophin-glycoprotein complex which forms a link between the F-actin cytoskeleton and the extracellular matrix. This chain is Alpha-sarcoglycan (SGCA), found in Homo sapiens (Human).